Reading from the N-terminus, the 779-residue chain is Protein zer-1 homolog (779 aa).

N-acetylalanine is present on A2. 3 LRR repeats span residues S226 to L245, H246 to R281, and L291 to E315. ARM repeat units follow at residues R440–I480, D524–D569, T571–E613, K615–F656, and P727–N769.

This sequence belongs to the zyg-11 family. As to quaternary structure, interacts with the ELOC-ELOB/Elongin BC complex. Part of an E3 ubiquitin ligase complex including ZER1, CUL2 and Elongin BC.

In terms of biological role, serves as substrate adapter subunit in the E3 ubiquitin ligase complex ZYG11B-CUL2-Elongin BC. Acts redudantly with ZYG11B to target substrates bearing N-terminal glycine degrons for proteasomal degradation. Involved in the clearance of proteolytic fragments generated by caspase cleavage during apoptosis since N-terminal glycine degrons are strongly enriched at caspase cleavage sites. Also important in the quality control of protein N-myristoylation in which N-terminal glycine degrons are conditionally exposed after a failure of N-myristoylation. The polypeptide is Protein zer-1 homolog (Mus musculus (Mouse)).